The primary structure comprises 316 residues: Taste receptor type 2 member 3 (316 aa).

The Extracellular portion of the chain corresponds to 1–6 (MMGLTE). The helical transmembrane segment at 7-27 (GVFLILSGTQFTLGILVNCFI) threads the bilayer. Residues 28-42 (ELVNGSSWFKTKRMS) lie on the Cytoplasmic side of the membrane. The helical transmembrane segment at 43 to 63 (LSDFIITTLALLRIILLCIIL) threads the bilayer. At 64 to 94 (TDSFLIEFSPNTHDSGIIMQIIDVSWTFTNH) the chain is on the extracellular side. Residues 95-115 (LSIWLATCLGVLYCLKIASFS) traverse the membrane as a helical segment. At 116–128 (HPTFLWLKWRVSR) the chain is on the cytoplasmic side. The helical transmembrane segment at 129–149 (VMVWMLLGALLLSCGSTASLI) threads the bilayer. Residues 150–186 (NEFKLYSVFRGIEATRNVTEHFRKKRSEYYLIHVLGT) lie on the Extracellular side of the membrane. A glycan (N-linked (GlcNAc...) asparagine) is linked at N166. Residues 187–207 (LWYLPPLIVSLASYSLLIFSL) traverse the membrane as a helical segment. Residues 208 to 234 (GRHTRQMLQNGTSSRDPTTEAHKRAIR) lie on the Cytoplasmic side of the membrane. A helical transmembrane segment spans residues 235–255 (IILSFFFLFLLYFLAFLIASF). Topologically, residues 256–266 (GNFLPKTKMAK) are extracellular. Residues 267–287 (MIGEVMTMFYPAGHSFILILG) form a helical membrane-spanning segment. At 288–316 (NSKLKQTFVVMLRCESGHLKPGSKGPIFS) the chain is on the cytoplasmic side.

Belongs to the G-protein coupled receptor T2R family. As to expression, expressed in subsets of taste receptor cells of the tongue and palate epithelium and exclusively in gustducin-positive cells. Expressed in the antrum and fundus (part of the stomach), duodenum and in gastric endocrine cells.

It localises to the membrane. Its function is as follows. Gustducin-coupled receptor implicated in the perception of bitter compounds in the oral cavity and the gastrointestinal tract. Signals through PLCB2 and the calcium-regulated cation channel TRPM5. The sequence is that of Taste receptor type 2 member 3 (TAS2R3) from Homo sapiens (Human).